The following is a 123-amino-acid chain: Holo-[acyl-carrier-protein] synthase (123 aa).

Mg(2+)-binding residues include Asp-9 and Glu-57.

This sequence belongs to the P-Pant transferase superfamily. AcpS family. Mg(2+) serves as cofactor.

The protein localises to the cytoplasm. It catalyses the reaction apo-[ACP] + CoA = holo-[ACP] + adenosine 3',5'-bisphosphate + H(+). Functionally, transfers the 4'-phosphopantetheine moiety from coenzyme A to a Ser of acyl-carrier-protein. The protein is Holo-[acyl-carrier-protein] synthase of Streptomyces avermitilis (strain ATCC 31267 / DSM 46492 / JCM 5070 / NBRC 14893 / NCIMB 12804 / NRRL 8165 / MA-4680).